The following is a 305-amino-acid chain: Phosphatidylinositol:ceramide inositolphosphotransferase 2 (305 aa).

6 helical membrane passes run 34-54, 81-101, 105-125, 168-188, 198-218, and 221-241; these read LLAG…VHYI, ETVF…PFIL, KIYT…CQFL, VMYG…LVFV, RFIK…IIAS, and HYSV…FCLD. H180 is a catalytic residue. Residues H221 and D225 contribute to the active site.

It belongs to the sphingomyelin synthase family. Expressed in leaves, roots, stems, flowers and siliques.

Its subcellular location is the golgi apparatus. It is found in the trans-Golgi network membrane. It carries out the reaction an N-(2R-hydroxy-very-long-chain fatty acyl)-(R)-4-hydroxysphingoid base + a 1,2-diacyl-sn-glycero-3-phospho-(1D-myo-inositol) = a 1D-myo-inositol-1-phospho-N-[(R)-2-hydroxy-very-long-chain fatty acyl]-(R)-4-hydroxysphingoid base + a 1,2-diacyl-sn-glycerol. Its pathway is sphingolipid metabolism. In terms of biological role, catalyzes the transfer of the phosphorylinositol group from phosphatidylinositol (PI) to phytoceramide, an essential step in sphingolipid biosynthesis. May play an important role in modulating plant programmed cell death (PCD) associated with defense (e.g. toward Golovinomyces cichoracearum) by promoting sphingolipid metabolism and thus regulating ceramide accumulation. The sequence is that of Phosphatidylinositol:ceramide inositolphosphotransferase 2 from Arabidopsis thaliana (Mouse-ear cress).